Consider the following 234-residue polypeptide: 2-C-methyl-D-erythritol 4-phosphate cytidylyltransferase (234 aa).

The protein belongs to the IspD/TarI cytidylyltransferase family. IspD subfamily.

It catalyses the reaction 2-C-methyl-D-erythritol 4-phosphate + CTP + H(+) = 4-CDP-2-C-methyl-D-erythritol + diphosphate. Its pathway is isoprenoid biosynthesis; isopentenyl diphosphate biosynthesis via DXP pathway; isopentenyl diphosphate from 1-deoxy-D-xylulose 5-phosphate: step 2/6. Catalyzes the formation of 4-diphosphocytidyl-2-C-methyl-D-erythritol from CTP and 2-C-methyl-D-erythritol 4-phosphate (MEP). In Syntrophus aciditrophicus (strain SB), this protein is 2-C-methyl-D-erythritol 4-phosphate cytidylyltransferase.